A 484-amino-acid chain; its full sequence is Poly(A) RNA polymerase GLD2 (484 aa).

2 positions are modified to phosphoserine: Ser62 and Ser69. The Nuclear localization signal signature appears at 76-92 (KRLSDEKNLPLDGKRQR). Phosphoserine is present on Ser95. The Mg(2+) site is built by Asp213 and Asp215. Positions 386 to 440 (NLGDLLLGFLKYYATEFDWNSQMISVREAKAIPRPDGIEWRNKYICVEEPFDGTN) constitute a PAP-associated domain.

The protein belongs to the DNA polymerase type-B-like family. GLD2 subfamily. As to quaternary structure, interacts with CPEB1, CPEB2, CPSF1 and PABPC1. Interacts with QKI isoform QKI7; promoting recruitment to miRNA miR-122 and miR-122 stabilization. Mg(2+) is required as a cofactor. It depends on Mn(2+) as a cofactor.

The protein localises to the cytoplasm. It is found in the nucleus. It carries out the reaction RNA(n) + ATP = RNA(n)-3'-adenine ribonucleotide + diphosphate. In terms of biological role, cytoplasmic poly(A) RNA polymerase that adds successive AMP monomers to the 3'-end of specific RNAs, forming a poly(A) tail. In contrast to the canonical nuclear poly(A) RNA polymerase, it only adds poly(A) to selected cytoplasmic mRNAs. Does not play a role in replication-dependent histone mRNA degradation. Adds a single nucleotide to the 3' end of specific miRNAs, monoadenylation stabilizes and prolongs the activity of some but not all miRNAs. The chain is Poly(A) RNA polymerase GLD2 from Bos taurus (Bovine).